Consider the following 798-residue polypeptide: Bromodomain-containing protein 2 (798 aa).

At Met1 the chain carries N-acetylmethionine. A disordered region spans residues 1–21 (MLQNVTPHKLPGEGNAGLLGL). Thr6 carries the phosphothreonine modification. Ser36 is modified (phosphoserine). A disordered region spans residues 53–72 (LQLAPANPPPPEVSNPKKPG). Residues 73-179 (RVTNQLQYLH…KIFLQKVASM (107 aa)) form the Bromo 1 domain. A protein-binding residues include Asp111, Tyr154, Asn155, Lys156, Asp159, and Asp160. 3 disordered regions span residues 267–348 (PPAQ…LSEQ), 455–648 (EPLE…KRQL), and 735–798 (EKRL…SDSG). Over residues 284–297 (TTTPTPTAILAPGS) the composition is skewed to low complexity. Residues Ser297, Ser300, and Ser304 each carry the phosphoserine modification. A compositionally biased stretch (basic and acidic residues) spans 315-331 (MRRESGRPIKPPRKDLP). The region spanning 343–452 (GKLSEQLKHC…DVFEFRYAKM (110 aa)) is the Bromo 2 domain. Residues 480–512 (SSEESSSESSSEEEEEEDEEDEEEESESSDSEE) are compositionally biased toward acidic residues. A compositionally biased stretch (basic residues) spans 542–564 (KPKRKREKKEKKKKRKAEKHRGR). Positions 553–557 (KKKRK) match the Nuclear localization signal motif. The NET domain occupies 630-712 (DSEEEEESRP…SCLRKKPRKP (83 aa)). At Ser631 the chain carries Phosphoserine. Basic and acidic residues predominate over residues 637–648 (SRPMSYDEKRQL). A compositionally biased stretch (low complexity) spans 772 to 792 (SASSSSSDSSSSSSSSSSSDT).

This sequence belongs to the BET family. As to quaternary structure, homodimer. Interacts with E2F1. Interacts with (acetylated) STAT3; promoting STAT3 recruitment to chromatin. Interacts with CTCF; promoting BRD2 recruitment to chromatin.

It localises to the nucleus. The protein localises to the chromosome. Its function is as follows. Chromatin reader protein that specifically recognizes and binds histone H4 acetylated at 'Lys-5' and 'Lys-12' (H4K5ac and H4K12ac, respectively), thereby controlling gene expression and remodeling chromatin structures. Recruits transcription factors and coactivators to target gene sites, and activates RNA polymerase II machinery for transcriptional elongation. Plays a key role in genome compartmentalization via its association with CTCF and cohesin: recruited to chromatin by CTCF and promotes formation of topologically associating domains (TADs) via its ability to bind acetylated histones, contributing to CTCF boundary formation and enhancer insulation. Also recognizes and binds acetylated non-histone proteins, such as STAT3. Involved in inflammatory response by regulating differentiation of naive CD4(+) T-cells into T-helper Th17: recognizes and binds STAT3 acetylated at 'Lys-87', promoting STAT3 recruitment to chromatin. In addition to acetylated lysines, also recognizes and binds lysine residues on histones that are both methylated and acetylated on the same side chain to form N6-acetyl-N6-methyllysine (Kacme), an epigenetic mark of active chromatin associated with increased transcriptional initiation. Specifically binds histone H4 acetyl-methylated at 'Lys-5' and 'Lys-12' (H4K5acme and H4K12acme, respectively). The polypeptide is Bromodomain-containing protein 2 (Brd2) (Rattus norvegicus (Rat)).